The following is a 348-amino-acid chain: GMP reductase (348 aa).

108–131 (ADFQKTKDIMALSDELIFICVDIA) is a binding site for NADP(+). Residues Gly181 and Gly183 each contribute to the K(+) site. Cys186 acts as the Thioimidate intermediate in catalysis. 216–239 (IIGDGGCSCAGDVSKAFGGGADFV) is a binding site for NADP(+).

The protein belongs to the IMPDH/GMPR family. GuaC type 1 subfamily. Homotetramer.

The enzyme catalyses IMP + NH4(+) + NADP(+) = GMP + NADPH + 2 H(+). Functionally, catalyzes the irreversible NADPH-dependent deamination of GMP to IMP. It functions in the conversion of nucleobase, nucleoside and nucleotide derivatives of G to A nucleotides, and in maintaining the intracellular balance of A and G nucleotides. This is GMP reductase from Vibrio parahaemolyticus serotype O3:K6 (strain RIMD 2210633).